We begin with the raw amino-acid sequence, 1556 residues long: Disco-interacting protein 2 homolog C (1556 aa).

Positions 7–120 (EGMALPLEVR…PMPSKRRSLV (114 aa)) constitute a DMAP1-binding domain. Disordered stretches follow at residues 47–157 (YLPQ…SQGS) and 170–189 (GSTT…SGAA). Basic and acidic residues predominate over residues 81 to 93 (GSRDERYRSDVHT). Composition is skewed to polar residues over residues 120 to 136 (VVQT…TSSG) and 144 to 157 (QGDS…SQGS). Residues 170-183 (GSTTSTTSSSSTQS) show a composition bias toward low complexity. T264 is modified (phosphothreonine).

It belongs to the DIP2 family.

In Homo sapiens (Human), this protein is Disco-interacting protein 2 homolog C (DIP2C).